The chain runs to 355 residues: Protein-glutamate methylesterase/protein-glutamine glutaminase 3 (355 aa).

A Response regulatory domain is found at 8-126 (RVLVVDDSPT…AEELRRWGKE (119 aa)). A 4-aspartylphosphate modification is found at aspartate 59. Residues 152-337 (PPTGARVDIF…LASMPELILQ (186 aa)) enclose the CheB-type methylesterase domain. Catalysis depends on residues serine 166, histidine 193, and aspartate 284.

Belongs to the CheB family. Phosphorylated by CheA. Phosphorylation of the N-terminal regulatory domain activates the methylesterase activity.

The protein resides in the cytoplasm. The enzyme catalyses [protein]-L-glutamate 5-O-methyl ester + H2O = L-glutamyl-[protein] + methanol + H(+). It carries out the reaction L-glutaminyl-[protein] + H2O = L-glutamyl-[protein] + NH4(+). Functionally, involved in chemotaxis. Part of a chemotaxis signal transduction system that modulates chemotaxis in response to various stimuli. Catalyzes the demethylation of specific methylglutamate residues introduced into the chemoreceptors (methyl-accepting chemotaxis proteins or MCP) by CheR. Also mediates the irreversible deamidation of specific glutamine residues to glutamic acid. This chain is Protein-glutamate methylesterase/protein-glutamine glutaminase 3, found in Myxococcus xanthus (strain DK1622).